The chain runs to 888 residues: Serine/arginine repetitive matrix protein 1 (888 aa).

The 100-residue stretch at 27–126 (QLKFAECLEK…AGIPTAFLEL (100 aa)) folds into the PWI domain. Residues 139–169 (EKLASMKKQDEDKEKRDKEDKDNREKRDRSR) show a composition bias toward basic and acidic residues. The segment at 139 to 888 (EKLASMKKQD…MRKAQVSPPS (750 aa)) is disordered. The segment covering 170 to 206 (SPRRRKSRSPSPRRRSSPIRRERKRSHSRSPHHRTKS) has biased composition (basic residues). Composition is skewed to basic and acidic residues over residues 213 to 232 (PEKKEATPEPEPSVKPKETV) and 254 to 276 (ETKEISPERNSKKEREKEKEKTR). Basic residues-rich tracts occupy residues 277–325 (QRSP…RTPP) and 332–347 (PRHRRSRSPVRRRRRS). Low complexity-rich tracts occupy residues 348–364 (SASLSGSSSSSSSSRSR) and 473–496 (SVQQRRQYRRQNQQSSSDSGSSSS). 2 stretches are compositionally biased toward basic residues: residues 528–554 (PRKRQKEPSPRRRRRSPSPPPARRRRS) and 561–585 (PRRRRSPSLPRRRSPSPPPRRRSPS). Low complexity predominate over residues 586–598 (PRRYSPPIQRRYS). Composition is skewed to basic residues over residues 614-629 (PKRRASPSPQSKRRVS) and 642-656 (AKRRSPSISSKHRKG). The segment covering 662-677 (SNRETRSPPQNKRDSP) has biased composition (basic and acidic residues). 3 stretches are compositionally biased toward low complexity: residues 697–712 (ASASPQRRQSPSPSTR), 728–749 (ASTPSPRSARRVSSSRSASGSP), and 763–775 (ARSRSPSANWSPA). The span at 780 to 790 (SPTQSPSPARN) shows a compositional bias: polar residues. Positions 798–823 (KKKKKKKDKKHKKDKKHKKHKKHKKE) are enriched in basic residues. Over residues 826–843 (AVAAAPAAVAAADTTSAQ) the composition is skewed to low complexity. Positions 866–876 (DLEKHLREKAL) are enriched in basic and acidic residues.

This sequence belongs to the splicing factor SR family.

The protein resides in the nucleus. Its function is as follows. Involved in pre-mRNA splicing and processing events. The chain is Serine/arginine repetitive matrix protein 1 (SRRM1) from Gallus gallus (Chicken).